The following is a 423-amino-acid chain: Glucose-6-phosphate isomerase (423 aa).

The active-site Proton donor is the glutamate 279. Catalysis depends on residues histidine 300 and lysine 413.

It belongs to the GPI family.

It localises to the cytoplasm. The catalysed reaction is alpha-D-glucose 6-phosphate = beta-D-fructose 6-phosphate. The protein operates within carbohydrate biosynthesis; gluconeogenesis. It participates in carbohydrate degradation; glycolysis; D-glyceraldehyde 3-phosphate and glycerone phosphate from D-glucose: step 2/4. Catalyzes the reversible isomerization of glucose-6-phosphate to fructose-6-phosphate. The chain is Glucose-6-phosphate isomerase from Acholeplasma laidlawii (strain PG-8A).